Here is an 860-residue protein sequence, read N- to C-terminus: Late endosome and vacuole interface protein 11 (860 aa).

Positions 19-45 (EIINNSDHSSSHSTSHEEEDEEEDDTE) are disordered. Residues 20–31 (IINNSDHSSSHS) are compositionally biased toward low complexity. The segment covering 35–45 (EEEDEEEDDTE) has biased composition (acidic residues). A BED-type zinc finger spans residues 84–138 (KNIAKFWSHFLAIEKKLTKVKCKHCGEILTRSDASLTKTFRSHLKTKHNISANKN). Cys-105, Cys-108, His-126, and His-131 together coordinate Zn(2+).

Belongs to the VID22 family.

It is found in the nucleus. Functionally, involved in vacuolar processing and morphology. This is Late endosome and vacuole interface protein 11 (ENV11) from Saccharomyces cerevisiae (strain ATCC 204508 / S288c) (Baker's yeast).